A 90-amino-acid chain; its full sequence is Small ribosomal subunit protein bS20 (90 aa).

Belongs to the bacterial ribosomal protein bS20 family.

Its function is as follows. Binds directly to 16S ribosomal RNA. The chain is Small ribosomal subunit protein bS20 from Mesomycoplasma hyopneumoniae (strain 232) (Mycoplasma hyopneumoniae).